We begin with the raw amino-acid sequence, 387 residues long: Low specificity L-threonine aldolase (387 aa).

N6-(pyridoxal phosphate)lysine is present on K213. K228 participates in a covalent cross-link: Glycyl lysine isopeptide (Lys-Gly) (interchain with G-Cter in ubiquitin). 2 positions are modified to phosphoserine: S367 and S369. Phosphothreonine is present on T370.

The protein belongs to the threonine aldolase family. In terms of assembly, homotetramer. Pyridoxal 5'-phosphate is required as a cofactor.

It carries out the reaction L-threonine = acetaldehyde + glycine. The catalysed reaction is L-allo-threonine = acetaldehyde + glycine. It participates in amino-acid biosynthesis; glycine biosynthesis; glycine from L-allo-threonine: step 1/1. Its pathway is amino-acid degradation; L-threonine degradation via aldolase pathway; acetaldehyde and glycine from L-threonine: step 1/1. Functionally, catalyzes the cleavage of L-allo-threonine and L-threonine to glycine and acetaldehyde. This chain is Low specificity L-threonine aldolase (GLY1), found in Saccharomyces cerevisiae (strain ATCC 204508 / S288c) (Baker's yeast).